We begin with the raw amino-acid sequence, 112 residues long: UPF0342 protein STER_0693 (112 aa).

This sequence belongs to the UPF0342 family.

The polypeptide is UPF0342 protein STER_0693 (Streptococcus thermophilus (strain ATCC BAA-491 / LMD-9)).